The following is a 170-amino-acid chain: ATP synthase subunit b (170 aa).

A helical membrane pass occupies residues 15–37 (GDILFQLLAMLILLALLKKYALG).

It belongs to the ATPase B chain family. In terms of assembly, F-type ATPases have 2 components, F(1) - the catalytic core - and F(0) - the membrane proton channel. F(1) has five subunits: alpha(3), beta(3), gamma(1), delta(1), epsilon(1). F(0) has three main subunits: a(1), b(2) and c(10-14). The alpha and beta chains form an alternating ring which encloses part of the gamma chain. F(1) is attached to F(0) by a central stalk formed by the gamma and epsilon chains, while a peripheral stalk is formed by the delta and b chains. The F(1)F(0) complex interacts with SpoIIIJ and YqjG; YqgA is found in the same complex.

The protein localises to the cell membrane. Functionally, f(1)F(0) ATP synthase produces ATP from ADP in the presence of a proton or sodium gradient. F-type ATPases consist of two structural domains, F(1) containing the extramembraneous catalytic core and F(0) containing the membrane proton channel, linked together by a central stalk and a peripheral stalk. During catalysis, ATP synthesis in the catalytic domain of F(1) is coupled via a rotary mechanism of the central stalk subunits to proton translocation. Its function is as follows. Component of the F(0) channel, it forms part of the peripheral stalk, linking F(1) to F(0). This chain is ATP synthase subunit b, found in Bacillus subtilis (strain 168).